Consider the following 167-residue polypeptide: Fimbrial adapter PapF (167 aa).

The N-terminal stretch at 1–18 (MIRLSLFISLLLTSVAVL) is a signal peptide.

It is found in the secreted. It localises to the fimbrium. In terms of biological role, adapter that links the PapG adhesin to the distal end of the tip fibrillum. PapF is required for the correct presentation of the adhesin at the distal end of the tip fibrillum. Pili are polar filaments radiating from the surface of the bacterium to a length of 0.5-1.5 micrometers and numbering 100-300 per cell, and enable bacteria to colonize the epithelium of specific host organs. In Escherichia coli, this protein is Fimbrial adapter PapF (papF).